The primary structure comprises 138 residues: Putative pre-16S rRNA nuclease (138 aa).

It belongs to the YqgF nuclease family.

The protein localises to the cytoplasm. In terms of biological role, could be a nuclease involved in processing of the 5'-end of pre-16S rRNA. This chain is Putative pre-16S rRNA nuclease, found in Azobacteroides pseudotrichonymphae genomovar. CFP2.